The following is a 300-amino-acid chain: Ribosomal protein L11 methyltransferase (300 aa).

The S-adenosyl-L-methionine site is built by Thr-152, Gly-173, Asp-195, and Asn-234.

Belongs to the methyltransferase superfamily. PrmA family.

The protein resides in the cytoplasm. It catalyses the reaction L-lysyl-[protein] + 3 S-adenosyl-L-methionine = N(6),N(6),N(6)-trimethyl-L-lysyl-[protein] + 3 S-adenosyl-L-homocysteine + 3 H(+). Its function is as follows. Methylates ribosomal protein L11. The chain is Ribosomal protein L11 methyltransferase from Burkholderia pseudomallei (strain 1710b).